A 413-amino-acid polypeptide reads, in one-letter code: Tyrosine--tRNA ligase (413 aa).

Position 33 (Tyr33) interacts with L-tyrosine. Residues 38 to 47 carry the 'HIGH' region motif; that stretch reads PTADSLHVGH. Residues Tyr162 and Gln166 each coordinate L-tyrosine. A 'KMSKS' region motif is present at residues 225 to 229; sequence KFGKT. ATP is bound at residue Lys228. In terms of domain architecture, S4 RNA-binding spans 346–413; sequence TSAIDAIVNV…KKKYYLLEIK (68 aa).

This sequence belongs to the class-I aminoacyl-tRNA synthetase family. TyrS type 1 subfamily. As to quaternary structure, homodimer.

It localises to the cytoplasm. It carries out the reaction tRNA(Tyr) + L-tyrosine + ATP = L-tyrosyl-tRNA(Tyr) + AMP + diphosphate + H(+). Catalyzes the attachment of tyrosine to tRNA(Tyr) in a two-step reaction: tyrosine is first activated by ATP to form Tyr-AMP and then transferred to the acceptor end of tRNA(Tyr). The sequence is that of Tyrosine--tRNA ligase from Mesoplasma florum (strain ATCC 33453 / NBRC 100688 / NCTC 11704 / L1) (Acholeplasma florum).